The chain runs to 568 residues: Phosphoprotein (568 aa).

Disordered stretches follow at residues 1–22 (MDQD…PGGR) and 40–320 (PTDI…GIGE). A compositionally biased stretch (basic and acidic residues) spans 7–20 (ILKEDSEVERKAPG). An N0 binding region spans residues 33-41 (DAVLSSEPT). Residues 50 to 60 (LHNTINTSQGP) are compositionally biased toward polar residues. At Ser68 the chain carries Phosphoserine; by host. Residues 83 to 101 (RSGEESRVSGRTSKPEAEA) are compositionally biased toward basic and acidic residues. A Phosphoserine; by host modification is found at Ser125. The span at 150–168 (GIEDENREMAAHPDKRGED) shows a compositional bias: basic and acidic residues. Positions 191–206 (ASNNGRSMEPGSSHSA) are enriched in polar residues. A phosphoserine; by host mark is found at Ser192, Ser249, and Ser257. The multimerization stretch occupies residues 344 to 411 (FESSRDASYV…SFRDIYKRFS (68 aa)). Residues 364–429 (YAEMTFNVCG…LLMSNLSTLH (66 aa)) adopt a coiled-coil conformation. A l protein binding region spans residues 412 to 445 (EYQKEQNSLLMSNLSTLHIITDRGGKTDNTDSLT). Phosphoserine; by host is present on residues Ser447 and Ser449. Residues 479–568 (DLIREDEFRD…VEEDIESLTN (90 aa)) form an interaction with the nucleocapsid (N-RNA) region.

This sequence belongs to the respirovirus P protein family. In terms of assembly, homotetramer. Interacts (via multimerization domain) with polymerase L; this interaction forms the polymerase complex. Interacts (via N-terminus) with N0; this interaction allows P to chaperon N0 before encapsidation and form the N-P complex. Interacts (via C-terminus) with N-RNA template; this interaction positions the polymerase on the template. Post-translationally, phosphorylated by PKC/PRKCZ, and other unknown kinases. Phosphorylation is necessary for viral transcription and replication. The N-terminus contains the majority of phosphorylated sites. Ser-249 is the major site of phosphorylation, but is not necessary for most functions.

It localises to the host cytoplasm. In terms of biological role, essential cofactor of the RNA polymerase L that plays a central role in the transcription and replication by forming the polymerase complex with RNA polymerase L and recruiting L to the genomic N-RNA template for RNA synthesis. Also plays a central role in the encapsidation of nascent RNA chains by forming the encapsidation complex with the nucleocapsid protein N (N-P complex). Acts as a chaperone for newly synthesized free N protein, so-called N0, allowing encapsidation of nascent RNA chains during replication. The nucleoprotein protein N prevents excessive phosphorylation of P, which leads to down-regulation of viral transcription/ replication. Participates, together with N, in the formation of viral factories (viroplasms), which are large inclusions in the host cytoplasm where replication takes place. Recruits host PI4KB and remodel the host endoplasmic reticulum membrane to form viral replication factories. This is Phosphoprotein (P/V/C) from Sendai virus (strain 6/94) (SeV).